Consider the following 138-residue polypeptide: Large ribosomal subunit protein uL16 (138 aa).

The segment covering 1–13 has biased composition (basic residues); that stretch reads MLQPKRRKYRKEQ. The disordered stretch occupies residues 1-22; it reads MLQPKRRKYRKEQKGRNTGVAT.

The protein belongs to the universal ribosomal protein uL16 family. In terms of assembly, part of the 50S ribosomal subunit.

Binds 23S rRNA and is also seen to make contacts with the A and possibly P site tRNAs. The chain is Large ribosomal subunit protein uL16 from Paraburkholderia phymatum (strain DSM 17167 / CIP 108236 / LMG 21445 / STM815) (Burkholderia phymatum).